Consider the following 123-residue polypeptide: uncharacterized protein (123 aa).

The first 20 residues, 1-20 (MARTLALRASAGLVAGMAMA), serve as a signal peptide directing secretion.

This is an uncharacterized protein from Mycobacterium bovis (strain ATCC BAA-935 / AF2122/97).